A 421-amino-acid polypeptide reads, in one-letter code: Serine hydroxymethyltransferase (421 aa).

Residues leucine 120 and 124 to 126 each bind (6S)-5,6,7,8-tetrahydrofolate; that span reads GHL. Lysine 229 is modified (N6-(pyridoxal phosphate)lysine). Residue 354–356 participates in (6S)-5,6,7,8-tetrahydrofolate binding; that stretch reads SPF.

It belongs to the SHMT family. Homodimer. Pyridoxal 5'-phosphate is required as a cofactor.

The protein resides in the cytoplasm. It carries out the reaction (6R)-5,10-methylene-5,6,7,8-tetrahydrofolate + glycine + H2O = (6S)-5,6,7,8-tetrahydrofolate + L-serine. It participates in one-carbon metabolism; tetrahydrofolate interconversion. It functions in the pathway amino-acid biosynthesis; glycine biosynthesis; glycine from L-serine: step 1/1. In terms of biological role, catalyzes the reversible interconversion of serine and glycine with tetrahydrofolate (THF) serving as the one-carbon carrier. This reaction serves as the major source of one-carbon groups required for the biosynthesis of purines, thymidylate, methionine, and other important biomolecules. Also exhibits THF-independent aldolase activity toward beta-hydroxyamino acids, producing glycine and aldehydes, via a retro-aldol mechanism. The sequence is that of Serine hydroxymethyltransferase from Opitutus terrae (strain DSM 11246 / JCM 15787 / PB90-1).